Reading from the N-terminus, the 133-residue chain is Holo-[acyl-carrier-protein] synthase (133 aa).

Mg(2+)-binding residues include aspartate 8 and glutamate 57.

The protein belongs to the P-Pant transferase superfamily. AcpS family. Mg(2+) serves as cofactor.

It is found in the cytoplasm. It catalyses the reaction apo-[ACP] + CoA = holo-[ACP] + adenosine 3',5'-bisphosphate + H(+). In terms of biological role, transfers the 4'-phosphopantetheine moiety from coenzyme A to a Ser of acyl-carrier-protein. The sequence is that of Holo-[acyl-carrier-protein] synthase from Parvibaculum lavamentivorans (strain DS-1 / DSM 13023 / NCIMB 13966).